The chain runs to 366 residues: PTI1-like tyrosine-protein kinase 2 (366 aa).

Basic and acidic residues predominate over residues 8–23; sequence GDKKGDSDLSNEEVHL. A disordered region spans residues 8-50; that stretch reads GDKKGDSDLSNEEVHLKSPWQNSEANQKNQKPQAVVKPEAQKE. Residues 26 to 39 show a composition bias toward polar residues; sequence PWQNSEANQKNQKP. Residues 71 to 353 enclose the Protein kinase domain; the sequence is FGSKSLIGEG…IVVKALQPLL (283 aa). ATP contacts are provided by residues 77–85 and K99; that span reads IGEGSYGRV. D203 functions as the Proton acceptor in the catalytic mechanism.

Belongs to the protein kinase superfamily. Tyr protein kinase family. Interacts with OXI1. Autophosphorylated and phosphorylated by OXI1.

It carries out the reaction L-tyrosyl-[protein] + ATP = O-phospho-L-tyrosyl-[protein] + ADP + H(+). Strongly activated in response to phosphatidic acid (PA) and xylanase in a OXI1- and PDK1-dependent manner, and, to a lesser extent, by hydrogen peroxide and flagellin in a OXI1-dependent manner. In terms of biological role, probable tyrosine-protein kinase involved in oxidative burst-mediated signaling leading to specific genes expression. In Arabidopsis thaliana (Mouse-ear cress), this protein is PTI1-like tyrosine-protein kinase 2 (PTI12).